The primary structure comprises 113 residues: Iron-sulfur cluster insertion protein ErpA (113 aa).

Residues Cys41, Cys105, and Cys107 each contribute to the iron-sulfur cluster site.

The protein belongs to the HesB/IscA family. In terms of assembly, homodimer. The cofactor is iron-sulfur cluster.

Its function is as follows. Required for insertion of 4Fe-4S clusters for at least IspG. This is Iron-sulfur cluster insertion protein ErpA from Vibrio vulnificus (strain CMCP6).